A 272-amino-acid chain; its full sequence is Potassium channel regulatory protein (272 aa).

One can recognise a BTB domain in the interval 5-106 (ELVTLNVGGK…LLNPYLLQPR (102 aa)).

As to quaternary structure, can form homooligomers. Interacts with KCNA1 (via cytoplasmic N-terminal domain) and KCNA4. As to expression, ubiquitous in normal tissues and expressed in some tumor tissues.

The protein resides in the endoplasmic reticulum. Inhibits potassium fluxes in cells. May regulate Kv1 family channel proteins by retaining a fraction of channels in endomembranes. The sequence is that of Potassium channel regulatory protein (KCNRG) from Homo sapiens (Human).